Consider the following 123-residue polypeptide: Large ribosomal subunit protein bL12 (123 aa).

The protein belongs to the bacterial ribosomal protein bL12 family. As to quaternary structure, homodimer. Part of the ribosomal stalk of the 50S ribosomal subunit. Forms a multimeric L10(L12)X complex, where L10 forms an elongated spine to which 2 to 4 L12 dimers bind in a sequential fashion. Binds GTP-bound translation factors.

Functionally, forms part of the ribosomal stalk which helps the ribosome interact with GTP-bound translation factors. Is thus essential for accurate translation. The sequence is that of Large ribosomal subunit protein bL12 from Chlorobium luteolum (strain DSM 273 / BCRC 81028 / 2530) (Pelodictyon luteolum).